Here is a 166-residue protein sequence, read N- to C-terminus: Lipoprotein signal peptidase (166 aa).

The next 3 membrane-spanning stretches (helical) occupy residues 12 to 32, 70 to 90, and 102 to 122; these read WLWLVVVVLIIDLGSKYLILQ, WFFAGIAIGICVILLVMMYRS, and ALIIGGALGNLFDRLWHGFVV. Active-site residues include Asp-123 and Asp-141. A helical transmembrane segment spans residues 137 to 157; that stretch reads FNLADTAICIGAALIVLEGFL.

This sequence belongs to the peptidase A8 family.

The protein localises to the cell inner membrane. It carries out the reaction Release of signal peptides from bacterial membrane prolipoproteins. Hydrolyzes -Xaa-Yaa-Zaa-|-(S,diacylglyceryl)Cys-, in which Xaa is hydrophobic (preferably Leu), and Yaa (Ala or Ser) and Zaa (Gly or Ala) have small, neutral side chains.. It participates in protein modification; lipoprotein biosynthesis (signal peptide cleavage). Its function is as follows. This protein specifically catalyzes the removal of signal peptides from prolipoproteins. The protein is Lipoprotein signal peptidase of Salmonella typhi.